The sequence spans 255 residues: Triosephosphate isomerase (255 aa).

9-11 (NWK) provides a ligand contact to substrate. H95 serves as the catalytic Electrophile. E167 acts as the Proton acceptor in catalysis. Residues G173, S212, and 233–234 (GG) each bind substrate.

Belongs to the triosephosphate isomerase family. In terms of assembly, homodimer.

The protein resides in the cytoplasm. The enzyme catalyses D-glyceraldehyde 3-phosphate = dihydroxyacetone phosphate. It functions in the pathway carbohydrate biosynthesis; gluconeogenesis. The protein operates within carbohydrate degradation; glycolysis; D-glyceraldehyde 3-phosphate from glycerone phosphate: step 1/1. Involved in the gluconeogenesis. Catalyzes stereospecifically the conversion of dihydroxyacetone phosphate (DHAP) to D-glyceraldehyde-3-phosphate (G3P). The chain is Triosephosphate isomerase from Escherichia fergusonii (strain ATCC 35469 / DSM 13698 / CCUG 18766 / IAM 14443 / JCM 21226 / LMG 7866 / NBRC 102419 / NCTC 12128 / CDC 0568-73).